The following is a 207-amino-acid chain: Small ribosomal subunit protein uS4 (207 aa).

One can recognise an S4 RNA-binding domain in the interval 97 to 159 (SRLDNVCYRM…AKSQLRIQAA (63 aa)).

The protein belongs to the universal ribosomal protein uS4 family. In terms of assembly, part of the 30S ribosomal subunit. Contacts protein S5. The interaction surface between S4 and S5 is involved in control of translational fidelity.

Its function is as follows. One of the primary rRNA binding proteins, it binds directly to 16S rRNA where it nucleates assembly of the body of the 30S subunit. Functionally, with S5 and S12 plays an important role in translational accuracy. This is Small ribosomal subunit protein uS4 from Halorhodospira halophila (strain DSM 244 / SL1) (Ectothiorhodospira halophila (strain DSM 244 / SL1)).